Here is a 384-residue protein sequence, read N- to C-terminus: DNA replication and repair protein RecF (384 aa).

An ATP-binding site is contributed by Gly43 to Thr50.

It belongs to the RecF family.

It localises to the cytoplasm. Functionally, the RecF protein is involved in DNA metabolism; it is required for DNA replication and normal SOS inducibility. RecF binds preferentially to single-stranded, linear DNA. It also seems to bind ATP. The sequence is that of DNA replication and repair protein RecF from Brucella abortus (strain 2308).